Consider the following 320-residue polypeptide: Beta-sarcoglycan (320 aa).

Positions 1-10 are enriched in low complexity; the sequence is MAAAAAAAAA. Positions 1 to 34 are disordered; the sequence is MAAAAAAAAATEQQSSNGPVKKSMREKAVERRNV. Over 1 to 67 the chain is Cytoplasmic; sequence MAAAAAAAAA…GLRGRKGNLA (67 aa). A compositionally biased stretch (basic and acidic residues) spans 23–34; the sequence is SMREKAVERRNV. A helical; Signal-anchor for type II membrane protein transmembrane segment spans residues 68 to 88; that stretch reads ICVIVLLFILAVINLLITLVI. Residues 89–320 are Extracellular-facing; it reads WAVIRIGPNG…VADNPCGNTH (232 aa). N-linked (GlcNAc...) asparagine glycans are attached at residues N160, N213, and N260. 2 cysteine pairs are disulfide-bonded: C290–C316 and C292–C309.

The protein belongs to the sarcoglycan beta/delta/gamma/zeta family. As to quaternary structure, cross-link to form 2 major subcomplexes: one consisting of SGCB, SGCD and SGCG and the other consisting of SGCB and SGCD. The association between SGCB and SGCG is particularly strong while SGCA is loosely associated with the other sarcoglycans. In terms of processing, disulfide bonds are present.

It is found in the cell membrane. The protein resides in the sarcolemma. It localises to the cytoplasm. Its subcellular location is the cytoskeleton. Functionally, component of the sarcoglycan complex, a subcomplex of the dystrophin-glycoprotein complex which forms a link between the F-actin cytoskeleton and the extracellular matrix. The sequence is that of Beta-sarcoglycan (SGCB) from Mesocricetus auratus (Golden hamster).